Consider the following 449-residue polypeptide: Trigger factor (449 aa).

The 72-residue stretch at 160–231 (TDQVTIEELG…VQSVQTKQLQ (72 aa)) folds into the PPIase FKBP-type domain. Residues 411-449 (GQQVAGRQEAGAEQTAQAAEQESGQPQAEGEQAAEQRGE) are disordered. Low complexity predominate over residues 415–443 (AGRQEAGAEQTAQAAEQESGQPQAEGEQA).

It belongs to the FKBP-type PPIase family. Tig subfamily.

The protein resides in the cytoplasm. The catalysed reaction is [protein]-peptidylproline (omega=180) = [protein]-peptidylproline (omega=0). Involved in protein export. Acts as a chaperone by maintaining the newly synthesized protein in an open conformation. Functions as a peptidyl-prolyl cis-trans isomerase. The sequence is that of Trigger factor from Deinococcus geothermalis (strain DSM 11300 / CIP 105573 / AG-3a).